A 172-amino-acid chain; its full sequence is Type IV secretion system putative outer membrane lipoprotein BRA0058/BS1330_II0058 (172 aa).

Positions 1-15 are cleaved as a signal peptide; sequence MRTLVMVACAVSLAA. A lipid anchor (N-palmitoyl cysteine) is attached at C16. A lipid anchor (S-diacylglycerol cysteine) is attached at C16. The 115-residue stretch at 58–172 folds into the OmpA-like domain; it reads WPARPPKQTV…RRVDIEILRK (115 aa).

The protein resides in the cell outer membrane. Its function is as follows. The VirB system could be required for the establishment of the replication niche in the host. The sequence is that of Type IV secretion system putative outer membrane lipoprotein BRA0058/BS1330_II0058 from Brucella suis biovar 1 (strain 1330).